We begin with the raw amino-acid sequence, 235 residues long: Class B acid phosphatase (235 aa).

Positions 1 to 22 (MKNLLKLSAIAILAASAVSTFA) are cleaved as a signal peptide. Asp67 serves as the catalytic Nucleophile. Asp67 and Asp69 together coordinate Mg(2+). The active-site Proton donor is Asp69. Substrate contacts are provided by residues 135–136 (TG) and Lys175. Residue Asp190 participates in Mg(2+) binding.

This sequence belongs to the class B bacterial acid phosphatase family. Homotetramer. It depends on Mg(2+) as a cofactor.

The protein localises to the periplasm. The enzyme catalyses a phosphate monoester + H2O = an alcohol + phosphate. In terms of biological role, dephosphorylates several organic phosphate monoesters. Also has a phosphotransferase activity catalyzing the transfer of low-energy phosphate groups from organic phosphate monoesters to free hydroxyl groups of various organic compounds. The polypeptide is Class B acid phosphatase (Haemophilus parainfluenzae (strain T3T1)).